A 304-amino-acid chain; its full sequence is Ornithine carbamoyltransferase (304 aa).

Residues S53–T56, Q80, R104, and H131–Q134 each bind carbamoyl phosphate. Residues N162, D219, and S223–M224 each bind L-ornithine. Residues C259–L260 and R287 contribute to the carbamoyl phosphate site.

It belongs to the aspartate/ornithine carbamoyltransferase superfamily. OTCase family.

It localises to the cytoplasm. It catalyses the reaction carbamoyl phosphate + L-ornithine = L-citrulline + phosphate + H(+). It functions in the pathway amino-acid biosynthesis; L-arginine biosynthesis; L-arginine from L-ornithine and carbamoyl phosphate: step 1/3. Reversibly catalyzes the transfer of the carbamoyl group from carbamoyl phosphate (CP) to the N(epsilon) atom of ornithine (ORN) to produce L-citrulline. This chain is Ornithine carbamoyltransferase, found in Nitrosococcus oceani (strain ATCC 19707 / BCRC 17464 / JCM 30415 / NCIMB 11848 / C-107).